Reading from the N-terminus, the 229-residue chain is Orotidine 5'-phosphate decarboxylase (229 aa).

Substrate-binding positions include Asp9, Lys31, 58–67 (DLKLFDIPNT), Thr121, Arg179, Gln188, Gly208, and Arg209. Lys60 acts as the Proton donor in catalysis.

The protein belongs to the OMP decarboxylase family. Type 1 subfamily. In terms of assembly, homodimer.

The catalysed reaction is orotidine 5'-phosphate + H(+) = UMP + CO2. Its pathway is pyrimidine metabolism; UMP biosynthesis via de novo pathway; UMP from orotate: step 2/2. In terms of biological role, catalyzes the decarboxylation of orotidine 5'-monophosphate (OMP) to uridine 5'-monophosphate (UMP). The protein is Orotidine 5'-phosphate decarboxylase of Lawsonia intracellularis (strain PHE/MN1-00).